Consider the following 189-residue polypeptide: Peptidyl-tRNA hydrolase (189 aa).

Tyrosine 14 is a binding site for tRNA. Histidine 19 serves as the catalytic Proton acceptor. Residues tyrosine 64, asparagine 66, and asparagine 112 each coordinate tRNA.

This sequence belongs to the PTH family. As to quaternary structure, monomer.

The protein localises to the cytoplasm. It catalyses the reaction an N-acyl-L-alpha-aminoacyl-tRNA + H2O = an N-acyl-L-amino acid + a tRNA + H(+). Functionally, hydrolyzes ribosome-free peptidyl-tRNAs (with 1 or more amino acids incorporated), which drop off the ribosome during protein synthesis, or as a result of ribosome stalling. Catalyzes the release of premature peptidyl moieties from peptidyl-tRNA molecules trapped in stalled 50S ribosomal subunits, and thus maintains levels of free tRNAs and 50S ribosomes. The protein is Peptidyl-tRNA hydrolase of Dehalococcoides mccartyi (strain CBDB1).